A 285-amino-acid polypeptide reads, in one-letter code: Meiotically up-regulated gene 74 protein (285 aa).

Its subcellular location is the cytoplasm. In terms of biological role, has a role in meiosis. This is Meiotically up-regulated gene 74 protein (mug74) from Schizosaccharomyces pombe (strain 972 / ATCC 24843) (Fission yeast).